The primary structure comprises 328 residues: Fe(3+) ions import ATP-binding protein FbpC 1 (328 aa).

An ABC transporter domain is found at 7-237 (LVLKNITKAF…PNSLFLANFM (231 aa)). Residue 39 to 46 (GPSGCGKT) participates in ATP binding.

Belongs to the ABC transporter superfamily. Fe(3+) ion importer (TC 3.A.1.10) family. As to quaternary structure, the complex is composed of two ATP-binding proteins (FbpC), two transmembrane proteins (FbpB) and a solute-binding protein (FbpA).

The protein localises to the cell inner membrane. The enzyme catalyses Fe(3+)(out) + ATP + H2O = Fe(3+)(in) + ADP + phosphate + H(+). In terms of biological role, part of the ABC transporter complex FbpABC involved in Fe(3+) ions import. Responsible for energy coupling to the transport system. This chain is Fe(3+) ions import ATP-binding protein FbpC 1, found in Haemophilus influenzae (strain ATCC 51907 / DSM 11121 / KW20 / Rd).